The primary structure comprises 814 residues: Acyl-coenzyme A dehydrogenase (814 aa).

Residue Glu497 is the Proton acceptor of the active site.

The protein belongs to the acyl-CoA dehydrogenase family. Requires FAD as cofactor.

The enzyme catalyses a medium-chain 2,3-saturated fatty acyl-CoA + oxidized [electron-transfer flavoprotein] + H(+) = a medium-chain (2E)-enoyl-CoA + reduced [electron-transfer flavoprotein]. It carries out the reaction a long-chain 2,3-saturated fatty acyl-CoA + oxidized [electron-transfer flavoprotein] + H(+) = a long-chain (2E)-enoyl-CoA + reduced [electron-transfer flavoprotein]. It participates in lipid metabolism; fatty acid beta-oxidation. Its function is as follows. Catalyzes the dehydrogenation of acyl-coenzymes A (acyl-CoAs) to 2-enoyl-CoAs, the first step of the beta-oxidation cycle of fatty acid degradation. Is required for the utilization of medium- and long-chain fatty acids as sole carbon sources for growth. Is needed for bacterial survival during carbone-source starvation. This chain is Acyl-coenzyme A dehydrogenase (fadE), found in Salmonella typhi.